We begin with the raw amino-acid sequence, 191 residues long: Classical arabinogalactan protein 9 (191 aa).

A signal peptide spans 1 to 20 (MARSFAIAVICIVLIAGVTG). Positions 20 to 172 (GQAPTSPPTA…SPTDVNDQNG (153 aa)) are disordered. Gln-21 carries the post-translational modification Pyrrolidone carboxylic acid. A 4-hydroxyproline mark is found at Pro-23, Pro-26, Pro-27, Pro-31, and Pro-33. The span at 24-146 (TSPPTATPAP…PSPSSSPPLP (123 aa)) shows a compositional bias: pro residues. 4 O-linked (Ara...) hydroxyproline glycosylation sites follow: Pro-26, Pro-27, Pro-31, and Pro-33. Over residues 155 to 172 (TDSISPAPSPTDVNDQNG) the composition is skewed to polar residues. Gly-172 carries GPI-anchor amidated glycine lipidation. A propeptide spans 173–191 (ASKMVSSLVFGSVLVWFMI) (removed in mature form).

The protein belongs to the classical AGP family. In terms of processing, O-glycosylated on hydroxyprolines; noncontiguous hydroxylproline residues are glycosylated with arabinogalactan. Predominantly expressed in flowers and at a lower level in leaves and siliques.

Its subcellular location is the cell membrane. Functionally, proteoglycan that seems to be implicated in diverse developmental roles such as differentiation, cell-cell recognition, embryogenesis and programmed cell death. The protein is Classical arabinogalactan protein 9 (AGP9) of Arabidopsis thaliana (Mouse-ear cress).